The following is a 137-amino-acid chain: Large-conductance mechanosensitive channel (137 aa).

Helical transmembrane passes span 10 to 30 and 76 to 96; these read FAMR…AAFG and GTFI…FSAV.

Belongs to the MscL family. As to quaternary structure, homopentamer.

Its subcellular location is the cell inner membrane. Channel that opens in response to stretch forces in the membrane lipid bilayer. May participate in the regulation of osmotic pressure changes within the cell. The polypeptide is Large-conductance mechanosensitive channel (Yersinia pseudotuberculosis serotype O:1b (strain IP 31758)).